Here is a 78-residue protein sequence, read N- to C-terminus: Acyl carrier protein (78 aa).

A Carrier domain is found at 2 to 77; the sequence is SSIEERVKKI…QATSYVEANL (76 aa). Serine 37 carries the O-(pantetheine 4'-phosphoryl)serine modification.

Belongs to the acyl carrier protein (ACP) family. In terms of processing, 4'-phosphopantetheine is transferred from CoA to a specific serine of apo-ACP by AcpS. This modification is essential for activity because fatty acids are bound in thioester linkage to the sulfhydryl of the prosthetic group.

It is found in the cytoplasm. Its pathway is lipid metabolism; fatty acid biosynthesis. In terms of biological role, carrier of the growing fatty acid chain in fatty acid biosynthesis. This is Acyl carrier protein from Hydrogenovibrio crunogenus (strain DSM 25203 / XCL-2) (Thiomicrospira crunogena).